Consider the following 220-residue polypeptide: Probable cytidylate kinase (220 aa).

10–18 (GPAASGKSS) is a binding site for ATP.

It belongs to the cytidylate kinase family. Type 1 subfamily.

It catalyses the reaction CMP + ATP = CDP + ADP. The enzyme catalyses dCMP + ATP = dCDP + ADP. This chain is Probable cytidylate kinase, found in Encephalitozoon cuniculi (strain GB-M1) (Microsporidian parasite).